The following is a 327-amino-acid chain: GDP-mannose transporter (327 aa).

The Cytoplasmic portion of the chain corresponds to 1-4 (MESS). The helical transmembrane segment at 5-25 (LAAIANSGPISIFSYCVSSIL) threads the bilayer. The Lumenal portion of the chain corresponds to 26–36 (MTVTNKYVLSG). Residues 37–57 (FSFNMNFLLLAVQSIVCIVTI) form a helical membrane-spanning segment. Topologically, residues 58–78 (GSLKSFGVITYRQFNKEEARK) are cytoplasmic. Residues 79-93 (WSPIAVLLVIMIYTS) traverse the membrane as a helical segment. Residues 94-102 (SKALQYLSI) lie on the Lumenal side of the membrane. A helical membrane pass occupies residues 103 to 125 (PVYTIFKNLTIILIAYGEVLWFG). At 126-131 (GKVTTM) the chain is on the cytoplasmic side. A helical membrane pass occupies residues 132-149 (ALSSFLLMVFSSVVAWYG). The Lumenal segment spans residues 150-163 (DEAVSGSGNESFIA). Residue N158 is glycosylated (N-linked (GlcNAc...) asparagine). The chain crosses the membrane as a helical span at residues 164 to 184 (LYLGYFWMATNCFASAAFVLI). The Cytoplasmic segment spans residues 185 to 207 (MRKRIKLTNFKDFDTMYYNNLLS). The chain crosses the membrane as a helical span at residues 208 to 228 (IPILLASSIIFEDWSAENLAV). Residues 229–238 (NFPSDNRTAT) lie on the Lumenal side of the membrane. The N-linked (GlcNAc...) asparagine glycan is linked to N234. A helical membrane pass occupies residues 239–259 (IAAMVLSGASSVGISYCSAWC). At 260–266 (VRVTSST) the chain is on the cytoplasmic side. The helical transmembrane segment at 267-289 (TYSMVGALNKLPIALSGLVFFPA) threads the bilayer. Residues 290-292 (AVN) are Lumenal-facing. A helical membrane pass occupies residues 293 to 312 (FWSVASIFVGFAAGLVYAVA). Residues 313-327 (KQRQQKENVSLPSSK) are Cytoplasmic-facing.

The protein belongs to the TPT transporter family. SLC35D subfamily. As to quaternary structure, homooligomer.

The protein resides in the golgi apparatus membrane. Its subcellular location is the cytoplasmic vesicle membrane. The protein localises to the endoplasmic reticulum membrane. Its function is as follows. Involved in the import of GDP-mannose from the cytoplasm into the Golgi lumen. This is GDP-mannose transporter (VRG4) from Scheffersomyces stipitis (strain ATCC 58785 / CBS 6054 / NBRC 10063 / NRRL Y-11545) (Yeast).